Here is a 555-residue protein sequence, read N- to C-terminus: Protein NRT1/ PTR FAMILY 5.4 (555 aa).

A run of 2 helical transmembrane segments spans residues 18–38 (AALFIIVVEIAERFAFYGLAS) and 62–82 (WIGVSCMFPILGAFLADSILG). The residue at position 86 (T86) is a Phosphothreonine. A run of 10 helical transmembrane segments spans residues 87 to 107 (VLLTSFIYLLGIVMLPLSVTV), 116 to 136 (VFFMALYVMAVGEGGHKPCVM), 159 to 179 (NYWYMAIVLASSIAVLALIFI), 187 to 207 (LGFSIIAGSVVIAIVIFLIGI), 311 to 331 (IPIWISLIMFCATLTQLNTFF), 348 to 368 (IPPAAFQSIVGVTILILIPLY), 392 to 412 (IGVGLFVATFNMVICGLVEAK), 435 to 455 (LWLLPQYILVGIGDVFTIVGM), 470 to 490 (IGAAIFISVVGVGSFVSTGII), and 516 to 536 (YYYWIIASLNAVSLCFYLFIA).

The protein belongs to the major facilitator superfamily. Proton-dependent oligopeptide transporter (POT/PTR) (TC 2.A.17) family. Expressed in roots and flowers.

The protein resides in the membrane. The sequence is that of Protein NRT1/ PTR FAMILY 5.4 (NPF5.4) from Arabidopsis thaliana (Mouse-ear cress).